Here is a 105-residue protein sequence, read N- to C-terminus: L-rhamnose mutarotase (105 aa).

Y19 contacts substrate. H23 functions as the Proton donor in the catalytic mechanism. Substrate is bound by residues Y42 and 77 to 78 (WW).

This sequence belongs to the rhamnose mutarotase family. As to quaternary structure, homodimer.

It localises to the cytoplasm. The enzyme catalyses alpha-L-rhamnose = beta-L-rhamnose. The protein operates within carbohydrate metabolism; L-rhamnose metabolism. Its function is as follows. Involved in the anomeric conversion of L-rhamnose. This chain is L-rhamnose mutarotase, found in Mesorhizobium japonicum (strain LMG 29417 / CECT 9101 / MAFF 303099) (Mesorhizobium loti (strain MAFF 303099)).